The sequence spans 255 residues: FMR1 neighbor protein (255 aa).

Residues 1 to 68 (MSSHRRKAKG…ESLKMRVSKP (68 aa)) lie on the Cytoplasmic side of the membrane. The chain crosses the membrane as a helical span at residues 69–89 (FGMLMLSIWILLFVCYYLSYY). Residues 90 to 183 (LCSGSSYFVL…FAPFRDVPKQ (94 aa)) are Extracellular-facing. Positions 125-184 (LLNFFFPTTCNLRENQVAKPCNELQDLSESECLRHKCCFSSSGTTSFKCFAPFRDVPKQM) constitute a P-type domain. The helical transmembrane segment at 184-204 (MMQMFGLGAISLILVCLPIYC) threads the bilayer. Over 205 to 255 (RSLFWRSEPADDLQRQDNRVVTGLKKQRRKRKRKSEMLQKAARGREEHGDE) the chain is Cytoplasmic. Residues 220-255 (QDNRVVTGLKKQRRKRKRKSEMLQKAARGREEHGDE) form a disordered region. The span at 229-238 (KKQRRKRKRK) shows a compositional bias: basic residues.

Testis-specific. Expressed in melanoma, sarcoma, lung, breast, bladder, esophageal and ovarian cancers.

The protein resides in the membrane. In Homo sapiens (Human), this protein is FMR1 neighbor protein.